We begin with the raw amino-acid sequence, 355 residues long: Dual-specificity RNA methyltransferase RlmN (355 aa).

The Proton acceptor role is filled by Glu86. The Radical SAM core domain occupies 105 to 338; that stretch reads KEARYTVCVS…CTIRESKGLD (234 aa). An intrachain disulfide couples Cys112 to Cys343. Cys119, Cys123, and Cys126 together coordinate [4Fe-4S] cluster. Residues 169–170, Ser201, 224–226, and Asn300 each bind S-adenosyl-L-methionine; these read GE and SLH. Catalysis depends on Cys343, which acts as the S-methylcysteine intermediate.

This sequence belongs to the radical SAM superfamily. RlmN family. [4Fe-4S] cluster is required as a cofactor.

It is found in the cytoplasm. It catalyses the reaction adenosine(2503) in 23S rRNA + 2 reduced [2Fe-2S]-[ferredoxin] + 2 S-adenosyl-L-methionine = 2-methyladenosine(2503) in 23S rRNA + 5'-deoxyadenosine + L-methionine + 2 oxidized [2Fe-2S]-[ferredoxin] + S-adenosyl-L-homocysteine. The catalysed reaction is adenosine(37) in tRNA + 2 reduced [2Fe-2S]-[ferredoxin] + 2 S-adenosyl-L-methionine = 2-methyladenosine(37) in tRNA + 5'-deoxyadenosine + L-methionine + 2 oxidized [2Fe-2S]-[ferredoxin] + S-adenosyl-L-homocysteine. In terms of biological role, specifically methylates position 2 of adenine 2503 in 23S rRNA and position 2 of adenine 37 in tRNAs. m2A2503 modification seems to play a crucial role in the proofreading step occurring at the peptidyl transferase center and thus would serve to optimize ribosomal fidelity. The sequence is that of Dual-specificity RNA methyltransferase RlmN from Nitratiruptor sp. (strain SB155-2).